A 34-amino-acid chain; its full sequence is Jingzhaotoxin F7-10.36 (34 aa).

Intrachain disulfides connect C2–C17, C9–C22, and C16–C29.

Belongs to the neurotoxin 10 (Hwtx-1) family. 50 (Jztz-F7) subfamily. As to expression, expressed by the venom gland.

Its subcellular location is the secreted. Probable ion channel inhibitor. The polypeptide is Jingzhaotoxin F7-10.36 (Chilobrachys guangxiensis (Chinese earth tiger tarantula)).